The primary structure comprises 133 residues: Putative biopolymer transport protein ExbD-like 1 (133 aa).

The Cytoplasmic segment spans residues 1–15; it reads MNYDNYWDEDKPELN. The helical transmembrane segment at 16–32 threads the bilayer; sequence ITPLVDVMLVLLAILMV. Residues 33–133 lie on the Periplasmic side of the membrane; the sequence is TTPTLTYKEE…FLKVSLITSP (101 aa).

Belongs to the ExbD/TolR family.

It is found in the cell inner membrane. The sequence is that of Putative biopolymer transport protein ExbD-like 1 from Helicobacter pylori (strain ATCC 700392 / 26695) (Campylobacter pylori).